Consider the following 92-residue polypeptide: Small ribosomal subunit protein uS19c (92 aa).

Belongs to the universal ribosomal protein uS19 family.

It is found in the plastid. The protein resides in the chloroplast. Protein S19 forms a complex with S13 that binds strongly to the 16S ribosomal RNA. The chain is Small ribosomal subunit protein uS19c from Draba nemorosa (Woodland whitlowgrass).